The chain runs to 218 residues: Thiopurine S-methyltransferase (218 aa).

Positions 10, 45, 66, and 123 each coordinate S-adenosyl-L-methionine.

The protein belongs to the class I-like SAM-binding methyltransferase superfamily. TPMT family.

The protein localises to the cytoplasm. It catalyses the reaction S-adenosyl-L-methionine + a thiopurine = S-adenosyl-L-homocysteine + a thiopurine S-methylether.. The protein is Thiopurine S-methyltransferase of Pseudomonas aeruginosa (strain LESB58).